The following is a 452-amino-acid chain: tRNA modification GTPase MnmE (452 aa).

(6S)-5-formyl-5,6,7,8-tetrahydrofolate is bound by residues Arg23, Glu80, and Lys119. Positions 215–374 (GIWIALVGQP…LQQGLLEMIG (160 aa)) constitute a TrmE-type G domain. Asn225 is a K(+) binding site. GTP is bound by residues 225 to 230 (NVGKSS), 244 to 250 (TEVPGTT), and 269 to 272 (DTAG). Ser229 provides a ligand contact to Mg(2+). Thr244, Val246, and Thr249 together coordinate K(+). Position 250 (Thr250) interacts with Mg(2+). Position 452 (Lys452) interacts with (6S)-5-formyl-5,6,7,8-tetrahydrofolate.

It belongs to the TRAFAC class TrmE-Era-EngA-EngB-Septin-like GTPase superfamily. TrmE GTPase family. As to quaternary structure, homodimer. Heterotetramer of two MnmE and two MnmG subunits. K(+) is required as a cofactor.

The protein resides in the cytoplasm. In terms of biological role, exhibits a very high intrinsic GTPase hydrolysis rate. Involved in the addition of a carboxymethylaminomethyl (cmnm) group at the wobble position (U34) of certain tRNAs, forming tRNA-cmnm(5)s(2)U34. The protein is tRNA modification GTPase MnmE of Nitrosospira multiformis (strain ATCC 25196 / NCIMB 11849 / C 71).